We begin with the raw amino-acid sequence, 311 residues long: Aspartate carbamoyltransferase catalytic subunit (311 aa).

Carbamoyl phosphate is bound by residues arginine 58 and threonine 59. Lysine 86 contributes to the L-aspartate binding site. The carbamoyl phosphate site is built by arginine 108, histidine 136, and glutamine 139. Positions 169 and 224 each coordinate L-aspartate. Carbamoyl phosphate is bound by residues glycine 265 and proline 266.

Belongs to the aspartate/ornithine carbamoyltransferase superfamily. ATCase family. In terms of assembly, heterododecamer (2C3:3R2) of six catalytic PyrB chains organized as two trimers (C3), and six regulatory PyrI chains organized as three dimers (R2).

It carries out the reaction carbamoyl phosphate + L-aspartate = N-carbamoyl-L-aspartate + phosphate + H(+). It functions in the pathway pyrimidine metabolism; UMP biosynthesis via de novo pathway; (S)-dihydroorotate from bicarbonate: step 2/3. In terms of biological role, catalyzes the condensation of carbamoyl phosphate and aspartate to form carbamoyl aspartate and inorganic phosphate, the committed step in the de novo pyrimidine nucleotide biosynthesis pathway. The chain is Aspartate carbamoyltransferase catalytic subunit from Geobacter sulfurreducens (strain ATCC 51573 / DSM 12127 / PCA).